A 62-amino-acid polypeptide reads, in one-letter code: Conotoxin TxIC (62 aa).

The signal sequence occupies residues 1–22 (MHCLPIFVILLLLTASGPSVDA). Positions 23 to 47 (QLKTKDDVPLSSFRDHAKSTLRRLQ) are excised as a propeptide. Intrachain disulfides connect Cys52–Cys58 and Cys53–Cys61. Pro60 is modified (4-hydroxyproline). Position 61 is a cysteine amide (Cys61).

This sequence belongs to the conotoxin A superfamily. In terms of tissue distribution, expressed by the venom duct.

The protein localises to the secreted. The sequence is that of Conotoxin TxIC from Conus textile (Cloth-of-gold cone).